A 182-amino-acid chain; its full sequence is Putative manganese efflux pump MntP (182 aa).

The next 6 helical transmembrane spans lie at 6–26 (LIPL…VSLG), 37–57 (ILYI…IGMV), 71–91 (HFAG…SSIL), 101–121 (IGIS…SVGL), 131–151 (VITI…GLFI), and 162–182 (YGEI…LFPI).

Belongs to the MntP (TC 9.B.29) family.

The protein resides in the cell membrane. Functionally, probably functions as a manganese efflux pump. The protein is Putative manganese efflux pump MntP of Bacillus cereus (strain AH187).